A 94-amino-acid polypeptide reads, in one-letter code: Transcription factor PRE6 (94 aa).

A disordered region spans residues 1-20; it reads MSSRRSSRSRQSGSSRISDD. The bHLH domain occupies 6–60; that stretch reads SSRSRQSGSSRISDDQISDLVSKLQHLIPELRRRRSDKVSASKVLQETCNYIRNL.

Belongs to the bHLH protein family. Interacts with HFR1.

Its subcellular location is the cytoplasm. It localises to the nucleus. Atypical and probable non DNA-binding bHLH transcription factor that regulates light-mediated responses in day light conditions by binding and inhibiting the activity of the bHLH transcription factor HFR1, a critical regulator of light signaling and shade avoidance. Forms non-functional heterodimers with HFR1, causing liberation and activation of PIF4 from the transcriptionally inactive HFR1-PIF4 complex. The polypeptide is Transcription factor PRE6 (PRE6) (Arabidopsis thaliana (Mouse-ear cress)).